The chain runs to 373 residues: L-threonine 3-dehydrogenase, mitochondrial (373 aa).

NAD(+)-binding positions include 62–67 (GGLGQL), 88–90 (DIR), 106–107 (DI), Y195, K199, and I225. Catalysis depends on Y195, which acts as the Proton donor/acceptor.

This sequence belongs to the NAD(P)-dependent epimerase/dehydratase family. In terms of assembly, homodimer.

It localises to the mitochondrion. The enzyme catalyses L-threonine + NAD(+) = (2S)-2-amino-3-oxobutanoate + NADH + H(+). Its pathway is amino-acid degradation; L-threonine degradation via oxydo-reductase pathway; glycine from L-threonine: step 1/2. Its function is as follows. Catalyzes the NAD(+)-dependent oxidation of L-threonine to 2-amino-3-ketobutyrate, mediating L-threonine catabolism. The sequence is that of L-threonine 3-dehydrogenase, mitochondrial from Sus scrofa (Pig).